Here is a 229-residue protein sequence, read N- to C-terminus: Large ribosomal subunit protein uL1 (229 aa).

Belongs to the universal ribosomal protein uL1 family. As to quaternary structure, part of the 50S ribosomal subunit.

Binds directly to 23S rRNA. The L1 stalk is quite mobile in the ribosome, and is involved in E site tRNA release. In terms of biological role, protein L1 is also a translational repressor protein, it controls the translation of the L11 operon by binding to its mRNA. The polypeptide is Large ribosomal subunit protein uL1 (Clostridium botulinum (strain Loch Maree / Type A3)).